A 492-amino-acid polypeptide reads, in one-letter code: MSVDMNSQGSDSNEEDYDPNCEEEEEEEEDPGDIEDYYVGVASDVEQQGADAFDPEEYQFTCLTYKESEGALHEHMTSLASVLKVSHSVAKLILVNFHWQVSEILDRYRSNSAQLLVEARVQPNPSKHVPTAHPPHHCAVCMQFVRKENLLSLACQHQFCRSCWEQHCSVLVKDGVGVGISCMAQDCPLRTPEDFVFPLLPNEELRDKYRRYLFRDYVESHFQLQLCPGADCPMVIRVQEPRARRVQCNRCSEVFCFKCRQMYHAPTDCATIRKWLTKCADDSETANYISAHTKDCPKCNICIEKNGGCNHMQCSKCKHDFCWMCLGDWKTHGSEYYECSRYKENPDIVNQSQQAQAREALKKYLFYFERWENHNKSLQLEAQTYERIHEKIQERVMNNLGTWIDWQYLQNAAKLLAKCRYTLQYTYPYAYYMESGPRKKLFEYQQAQLEAEIENLSWKVERADSYDRGDLENQMHIAEQRRRTLLKDFHDT.

Positions 1 to 11 are enriched in polar residues; the sequence is MSVDMNSQGSD. Residues 1–37 form a disordered region; it reads MSVDMNSQGSDSNEEDYDPNCEEEEEEEEDPGDIEDY. Acidic residues predominate over residues 12 to 36; the sequence is SNEEDYDPNCEEEEEEEEDPGDIED. The interval 64–111 is UBA-like; it reads TYKESEGALHEHMTSLASVLKVSHSVAKLILVNFHWQVSEILDRYRSN. The interval 134–343 is TRIAD supradomain; the sequence is PPHHCAVCMQ…SEYYECSRYK (210 aa). Zn(2+) contacts are provided by Cys138, Cys141, Cys155, His157, Cys160, Cys163, Cys182, Cys187, Cys227, Cys232, Cys248, Cys251, Cys256, Cys259, His264, Cys269, Cys296, and Cys299. An RING-type 1 zinc finger spans residues 138–187; it reads CAVCMQFVRKENLLSLACQHQFCRSCWEQHCSVLVKDGVGVGISCMAQDC. The IBR-type zinc finger occupies 207-269; the sequence is DKYRRYLFRD…RQMYHAPTDC (63 aa). Residues 296–325 form an RING-type 2; atypical zinc finger; it reads CPKCNICIEKNGGCNHMQCSKCKHDFCWMC. Cys309 is an active-site residue. Cys314, Cys317, Cys322, Cys325, His332, and Cys339 together coordinate Zn(2+). Ser352 carries the post-translational modification Phosphoserine. Positions 358–492 are ariadne domain; sequence REALKKYLFY…RTLLKDFHDT (135 aa).

It belongs to the RBR family. Ariadne subfamily. In terms of assembly, interacts (via RING-type zinc finger 1) with UBE2L3. Interacts (via RING-type zinc finger 2) with UBE2N. Interacts with neddylated CUL5. Interacts (via RING-type 2) with GFI1B. Interacts with GFI1; prevents its ubiquitination and proteasomal degradation. Interacts with DCUN1D1 (via UBA-like domain); promotes DCUN1D1 ubiquitination. Ubiquitinated. Ubiquitination promotes proteasomal degradation.

It is found in the nucleus. The protein resides in the cytoplasm. It catalyses the reaction [E2 ubiquitin-conjugating enzyme]-S-ubiquitinyl-L-cysteine + [acceptor protein]-L-lysine = [E2 ubiquitin-conjugating enzyme]-L-cysteine + [acceptor protein]-N(6)-ubiquitinyl-L-lysine.. Its pathway is protein modification; protein ubiquitination. Autoinhibited by the ariadne domain, which masks the second RING-type zinc finger that contains the active site and inhibits the E3 activity. Inhibition is relieved upon binding to neddylated cullin-RING ubiquitin ligase complexes, which activate the E3 ligase activity of ARIH1. In terms of biological role, E3 ubiquitin-protein ligase, which catalyzes ubiquitination of target proteins together with ubiquitin-conjugating enzyme E2 UBE2L3. Acts as an atypical E3 ubiquitin-protein ligase by working together with cullin-5-RING ubiquitin ligase complex (ECS complex, also named CRL5 complex) and initiating ubiquitination of ECS substrates: associates with ECS complex and specifically mediates addition of the first ubiquitin on ECS targets. The initial ubiquitin is then elongated. E3 ubiquitin-protein ligase activity is activated upon binding to neddylated form of the ECS complex. Mediates 'Lys-6', 'Lys-48'- and 'Lys-63'-linked polyubiquitination. May play a role in myelopoiesis. This Mus musculus (Mouse) protein is E3 ubiquitin-protein ligase ARIH2 (Arih2).